An 843-amino-acid polypeptide reads, in one-letter code: Pentatricopeptide repeat-containing protein At4g21880, mitochondrial (843 aa).

7 PPR repeats span residues 392–426 (SSTSYENLVSYLCGSNEVVTALDIVENMCEAGLVI), 427–461 (SANILHSLLQAIEQILEFNLVQRIYSIMSNKSVKP), 462–496 (NSETFRKSINLCIRIKDFEGAYNMLGNLKNFNLAP), 497–531 (NSSMYNSIMAGYFREKKVNSALKVLKEMKEADVKP), 532–562 (DSVTFSYLINYCGEEATIAKYYKEMKQAGVE), 564–594 (NKHVYMSLVKAYASCGQFEKAKQVLMDLEVP), and 598–632 (HNELKSVLISALASNGNITEALSIYEEMKKLRCPV).

It belongs to the PPR family. P subfamily.

Its subcellular location is the mitochondrion. This is Pentatricopeptide repeat-containing protein At4g21880, mitochondrial from Arabidopsis thaliana (Mouse-ear cress).